We begin with the raw amino-acid sequence, 939 residues long: Collagen-like protein 3 (939 aa).

Residues Asn-15, Asn-35, Asn-39, and Asn-82 are each glycosylated (N-linked (GlcNAc...) asparagine; by host). Residues Ser-84 to Pro-95 show a composition bias toward low complexity. Disordered regions lie at residues Ser-84–Asn-332 and Ser-358–Ala-697. Collagen-like domains follow at residues Gly-88–Lys-147, Gly-148–Lys-207, Gly-211–Leu-330, Gly-364–Asp-423, Gly-427–Lys-486, Gly-493–Lys-552, Gly-564–Val-622, and Gly-638–Ala-697. 13 stretches are compositionally biased toward basic and acidic residues: residues Lys-96–Glu-110, Asp-123–Ile-182, Asp-189–Leu-230, Asp-237–Pro-260, Asp-267–Lys-288, Lys-297–Glu-314, Lys-360–Leu-371, Asp-378–Leu-416, Asp-423–Ile-491, Asp-498–Ile-527, Lys-537–Lys-552, Lys-560–Ile-580, and Lys-589–Asp-684. Asn-788, Asn-820, Asn-858, Asn-919, and Asn-925 each carry an N-linked (GlcNAc...) asparagine; by host glycan. Positions Asn-896–Gly-923 are disordered. The span at Tyr-910–Gly-923 shows a compositional bias: gly residues.

In terms of processing, may be hydroxylated on lysine by the viral-encoded procollagen-lysine,2-oxoglutarate 5-dioxygenase.

Its subcellular location is the virion. Functionally, may participate in the formation of a layer of cross-linked glycosylated fibrils at the viral surface thus giving it a hairy-like appearance. The chain is Collagen-like protein 3 from Acanthamoeba polyphaga (Amoeba).